We begin with the raw amino-acid sequence, 334 residues long: Aspartate carbamoyltransferase catalytic subunit (334 aa).

Carbamoyl phosphate-binding residues include Arg71 and Thr72. Lys99 lines the L-aspartate pocket. Carbamoyl phosphate is bound by residues Arg121, His151, and Gln154. Residues Arg184 and Arg239 each contribute to the L-aspartate site. Carbamoyl phosphate contacts are provided by Gly280 and Pro281.

Belongs to the aspartate/ornithine carbamoyltransferase superfamily. ATCase family. As to quaternary structure, heterododecamer (2C3:3R2) of six catalytic PyrB chains organized as two trimers (C3), and six regulatory PyrI chains organized as three dimers (R2).

The enzyme catalyses carbamoyl phosphate + L-aspartate = N-carbamoyl-L-aspartate + phosphate + H(+). The protein operates within pyrimidine metabolism; UMP biosynthesis via de novo pathway; (S)-dihydroorotate from bicarbonate: step 2/3. Functionally, catalyzes the condensation of carbamoyl phosphate and aspartate to form carbamoyl aspartate and inorganic phosphate, the committed step in the de novo pyrimidine nucleotide biosynthesis pathway. The sequence is that of Aspartate carbamoyltransferase catalytic subunit from Pseudomonas entomophila (strain L48).